The primary structure comprises 125 residues: UPF0225 protein Cgl1438/cg1626 (125 aa).

This sequence belongs to the UPF0225 family.

The protein is UPF0225 protein Cgl1438/cg1626 of Corynebacterium glutamicum (strain ATCC 13032 / DSM 20300 / JCM 1318 / BCRC 11384 / CCUG 27702 / LMG 3730 / NBRC 12168 / NCIMB 10025 / NRRL B-2784 / 534).